A 245-amino-acid chain; its full sequence is Polyhedrin (245 aa).

This sequence belongs to the polyhedrin family.

In terms of biological role, major component of the virus occlusion bodies, which are large proteinaceous structures (polyhedra), that protect the virus from the outside environment for extended periods until they are ingested by insect larvae. The chain is Polyhedrin from Lepidoptera (butterflies and moths).